The primary structure comprises 317 residues: U5 small nuclear ribonucleoprotein TSSC4 (317 aa).

Acidic residues predominate over residues 1-19 (MAETEAGLEVEEPTEDDTL). The interval 1–78 (MAETEAGLEV…IPTTAVQPFH (78 aa)) is disordered. Positions 20–37 (PSDTVSLSDSDSDLSLPS) are enriched in low complexity. Phosphoserine occurs at positions 57, 64, 83, and 92. The tract at residues 74 to 101 (VQPFHLRGMSSTFSQRSHSIFDCLESAA) is hom2; mediates interaction with the U5 snRNP complexes and required for spliceosomal tri-snRNP complex assembly. Residues 123–151 (VAPPSQTPARSLSRVHGNTDPTRVHPVPD) are disordered. Positions 146 to 300 (VHPVPDYVSH…SKKRSRDHFR (155 aa)) are interaction with SNRNP200. The hom3; mediates interaction with the U5 snRNP complexes stretch occupies residues 147-183 (HPVPDYVSHPERWTKYSLEDVSETSEQSNRDAALAFL). Residues 198-238 (FNQDPSSCGEGRVVFTKPVRGSEARAERKRVLKKGVVSGAG) form a hom4; necessary for interaction with the PRPF19 complex and required for spliceosomal tri-snRNP complex assembly region. N6-acetyllysine is present on Lys-214. Residues 247 to 317 (HLAGPEAEEW…GPGSERGPSV (71 aa)) are disordered.

Belongs to the TSSC4 family. In terms of assembly, interacts in a RNA-independent manner with distinct U5 snRNP-containing complexes, the mono-U5 snRNP and the post-splicing U5 snRNP-PRPF19 complex. Interacts with SNRNP200; the interaction is direct, excludes recruitment of C9ORF78 and WBP4 to SNRNP200 and negatively regulates its RNA helicase activity. Interacts with PRPF8; the interaction is direct.

It is found in the nucleus. It localises to the cytoplasm. Functionally, protein associated with the U5 snRNP, during its maturation and its post-splicing recycling and which is required for spliceosomal tri-snRNP complex assembly in the nucleus. Has a molecular sequestering activity and transiently hinders SNRNP200 binding sites for constitutive splicing factors that intervene later during the assembly of the spliceosome and splicing. Together with its molecular sequestering activity, may also function as a molecular adapter and placeholder, coordinating the assembly of the U5 snRNP and its association with the U4/U6 di-snRNP. This chain is U5 small nuclear ribonucleoprotein TSSC4, found in Rattus norvegicus (Rat).